The primary structure comprises 602 residues: Elongation factor 4 (602 aa).

A tr-type G domain is found at 8-190 (DLIRNFSIVA…AIVHRLPPPK (183 aa)). Residues 20-25 (DHGKST) and 137-140 (NKID) contribute to the GTP site.

It belongs to the TRAFAC class translation factor GTPase superfamily. Classic translation factor GTPase family. LepA subfamily.

It is found in the cell inner membrane. The enzyme catalyses GTP + H2O = GDP + phosphate + H(+). Required for accurate and efficient protein synthesis under certain stress conditions. May act as a fidelity factor of the translation reaction, by catalyzing a one-codon backward translocation of tRNAs on improperly translocated ribosomes. Back-translocation proceeds from a post-translocation (POST) complex to a pre-translocation (PRE) complex, thus giving elongation factor G a second chance to translocate the tRNAs correctly. Binds to ribosomes in a GTP-dependent manner. The chain is Elongation factor 4 from Cereibacter sphaeroides (strain ATCC 17029 / ATH 2.4.9) (Rhodobacter sphaeroides).